A 294-amino-acid chain; its full sequence is MNFFQAIILGIVQALTEYLPVSSSAHIRIFGDLMLGSDPGAAFTAIIQIGTELAVILYFRHDIINILTHWFGCLFGRNGKDWKARMGRGDEYATLGWNIIVGSIPIVILGFTLQDVIETSLRNLWITVTVLLVFGVLLWVVDAKARQNKTMDDMTYRDAFLFGLGQSMALIPGVSRSGGTITVGRALGYTREAAVRLSFLMAIPAVFGSGLLETVKAVKNYKTDAMFPGWGPTLVAMVISFVLGYIVIIGFLKFVSTFSYKAFAIYRIGLAVVVALLLIVGVLPAIDPSVAAAA.

Transmembrane regions (helical) follow at residues 39 to 59 (PGAA…ILYF), 93 to 113 (ATLG…GFTL), 123 to 143 (NLWI…VVDA), 198 to 218 (SFLM…VKAV), 232 to 252 (PTLV…IGFL), and 268 to 288 (IGLA…AIDP).

It belongs to the UppP family.

The protein resides in the cell membrane. It carries out the reaction di-trans,octa-cis-undecaprenyl diphosphate + H2O = di-trans,octa-cis-undecaprenyl phosphate + phosphate + H(+). Its function is as follows. Catalyzes the dephosphorylation of undecaprenyl diphosphate (UPP). Confers resistance to bacitracin. The protein is Undecaprenyl-diphosphatase of Bifidobacterium longum subsp. infantis (strain ATCC 15697 / DSM 20088 / JCM 1222 / NCTC 11817 / S12).